Consider the following 511-residue polypeptide: Immunoglobulin-binding protein EibD (511 aa).

Residues 1–26 form the signal peptide; sequence MSKKFTMTLLSSSLAGLLVMSGGVSA. Residues 27 to 417 are surface exposed passenger domain; that stretch reads QNGTYSVLQD…SKAIAANTRT (391 aa). Topologically, residues 27–460 are extracellular; the sequence is QNGTYSVLQD…GLFQPYSVGK (434 aa). Positions 161-287 are head domain; sequence DAKASGEFSV…TGTESDKTYG (127 aa). Positions 288 to 303 are neck; the sequence is TRVLGGLSDGTRNSDA. The right-handed coiled-coil (RHcc) stretch occupies residues 304-349; it reads ATVGQLNRKVGGVYDDVKARITVESEKQKKYTDQKTSEVNEKVEAR. Residues 304 to 349 adopt a coiled-coil conformation; sequence ATVGQLNRKVGGVYDDVKARITVESEKQKKYTDQKTSEVNEKVEAR. The interval 329–344 is required to bind IgA; the sequence is EKQKKYTDQKTSEVNE. Residues 350–375 are saddle domain; it reads TTVGVDSDGKLTRAEGATKTIAVNDG. Positions 376 to 441 form a coiled coil; sequence LVALSGRTDR…INENHKEMKR (66 aa). A left-handed coiled-coil (LHcc) region spans residues 376–441; that stretch reads LVALSGRTDR…INENHKEMKR (66 aa). The tract at residues 384–418 is required to bind IgG; the sequence is DRIDYAVGAIDGRVTRNTQSIEKNSKAIAANTRTL. Residues 418-460 are outer membrane translocation of the passenger domain; it reads LQQHSARLDSQQRQINENHKEMKRAAAQSAALTGLFQPYSVGK. Beta stranded transmembrane passes span 461–471, 474–485, 488–497, and 501–511; these read FNATAAVGGYS, QALAVGVGYRFN, TAAKAGVAFS, and ASWNVGVNFEF. The tract at residues 461-511 is translocator domain; sequence FNATAAVGGYSDQQALAVGVGYRFNEQTAAKAGVAFSDGDASWNVGVNFEF.

This sequence belongs to the autotransporter-2 (AT-2) (TC 1.B.40) family. Eib subfamily. As to quaternary structure, homotrimer; can probably form mixed heterotrimers in vivo. Will form mixed heterotrimers with EibA or EibC; these are correctly located in the outer membrane and bind IgG Fc, although less well than homotrimers. In denaturing gels runs as a band of about 210 kDa. Binds the Fc portion of immunoglobulins; binds more than 1 Fc per subunit, can be modeled to bind 3 Fc per trimer.

It is found in the cell surface. The protein localises to the cell outer membrane. Its function is as follows. Binds (in a non-immune fashion) to the Fc portion of human IgA and IgG; binding occurs on the cell surface. Confers the ability to survive exposure to human serum exposure. Binds to the Fc portion of human IgG, IgA and to whole mouse antibodies also via Fc. Upon overexpression cells acquire an extra cell surface layer that forms a zipper-like contact between cells; cells autoagglutinate and form biofilm more readily, suggesting it may play a role in defense against a host. This Escherichia coli protein is Immunoglobulin-binding protein EibD.